Reading from the N-terminus, the 300-residue chain is Protease HtpX homolog (300 aa).

2 helical membrane-spanning segments follow: residues 7–24 (GILM…GALI) and 29–46 (GAII…FTFW). Histidine 130 is a binding site for Zn(2+). Glutamate 131 is a catalytic residue. Histidine 134 lines the Zn(2+) pocket. Helical transmembrane passes span 145-165 (VTAT…FFGG) and 174-194 (PMGL…AGLV). Glutamate 203 contacts Zn(2+).

It belongs to the peptidase M48B family. Zn(2+) serves as cofactor.

Its subcellular location is the cell inner membrane. The chain is Protease HtpX homolog from Cereibacter sphaeroides (strain ATCC 17029 / ATH 2.4.9) (Rhodobacter sphaeroides).